We begin with the raw amino-acid sequence, 344 residues long: Cyclin-D1-binding protein 1 homolog (344 aa).

The disordered stretch occupies residues 191–215 (SQDPFGDVLDDDDDDEGGRGNQDRY).

The protein belongs to the CCNDBP1 family.

The protein localises to the cytoplasm. The protein resides in the nucleus. In terms of biological role, may negatively regulate cell cycle progression. This chain is Cyclin-D1-binding protein 1 homolog (ccndbp1), found in Danio rerio (Zebrafish).